The chain runs to 299 residues: Oxygen-dependent coproporphyrinogen-III oxidase (299 aa).

Serine 92 is a binding site for substrate. 2 residues coordinate a divalent metal cation: histidine 96 and histidine 106. Histidine 106 (proton donor) is an active-site residue. 108–110 (NVR) contributes to the substrate binding site. Residues histidine 145 and histidine 175 each coordinate a divalent metal cation. The important for dimerization stretch occupies residues 240–275 (YVEFNLVWDRGTLFGLQTGGRTESILMSMPPLVRWE). 258–260 (GGR) is a binding site for substrate.

It belongs to the aerobic coproporphyrinogen-III oxidase family. Homodimer. The cofactor is a divalent metal cation.

The protein localises to the cytoplasm. The enzyme catalyses coproporphyrinogen III + O2 + 2 H(+) = protoporphyrinogen IX + 2 CO2 + 2 H2O. Its pathway is porphyrin-containing compound metabolism; protoporphyrin-IX biosynthesis; protoporphyrinogen-IX from coproporphyrinogen-III (O2 route): step 1/1. Involved in the heme biosynthesis. Catalyzes the aerobic oxidative decarboxylation of propionate groups of rings A and B of coproporphyrinogen-III to yield the vinyl groups in protoporphyrinogen-IX. In Salmonella newport (strain SL254), this protein is Oxygen-dependent coproporphyrinogen-III oxidase.